Here is a 309-residue protein sequence, read N- to C-terminus: uncharacterized protein (309 aa).

Positions 272-291 (PSLDAPSETVEAFPEPQKNL) are disordered.

This is an uncharacterized protein from Bacillus subtilis (strain 168).